The chain runs to 799 residues: ATP synthase subunit alpha (799 aa).

Positions 1 to 549 (MTDNKNHSLI…EEVSLKPTTE (549 aa)) are ATP synthase alpha chain. Residue 170 to 177 (GDRQTGKT) participates in ATP binding. Residues 550-799 (TSEAVQIEEK…KGPSGFTYLK (250 aa)) form a unknown region.

Belongs to the ATPase alpha/beta chains family. F-type ATPases have 2 components, CF(1) - the catalytic core - and CF(0) - the membrane proton channel. CF(1) has five subunits: alpha(3), beta(3), gamma(1), delta(1), epsilon(1). CF(0) has three main subunits: a(1), b(2) and c(9-12). The alpha and beta chains form an alternating ring which encloses part of the gamma chain. CF(1) is attached to CF(0) by a central stalk formed by the gamma and epsilon chains, while a peripheral stalk is formed by the delta and b chains.

The protein resides in the cell membrane. The enzyme catalyses ATP + H2O + 4 H(+)(in) = ADP + phosphate + 5 H(+)(out). Produces ATP from ADP in the presence of a proton gradient across the membrane. The alpha chain is a regulatory subunit. In Ureaplasma parvum serovar 3 (strain ATCC 27815 / 27 / NCTC 11736), this protein is ATP synthase subunit alpha (atpA).